We begin with the raw amino-acid sequence, 166 residues long: Transcriptional repressor NrdR (166 aa).

A zinc finger lies at 3–34; the sequence is CPFCHFVETDVIDTRKLYEGEVIRRRRRCRAC. The ATP-cone domain occupies 49–139; that stretch reads LMVVKKDGTR…VYRAFTDIGK (91 aa).

Belongs to the NrdR family. It depends on Zn(2+) as a cofactor.

Its function is as follows. Negatively regulates transcription of bacterial ribonucleotide reductase nrd genes and operons by binding to NrdR-boxes. This is Transcriptional repressor NrdR from Chloroflexus aurantiacus (strain ATCC 29364 / DSM 637 / Y-400-fl).